Reading from the N-terminus, the 618-residue chain is Acetolactate synthase (618 aa).

The tract at residues 1 to 30 (MSAPTKPHSPTFKPEPHSAANEPKHPAARP) is disordered. Residue Glu-85 participates in thiamine diphosphate binding. FAD contacts are provided by residues Arg-187, 293-314 (HGTV…LGTR), and 336-355 (DIDP…IVGD). The tract at residues 429-509 (QHQMWAAQFI…VKVALINNGN (81 aa)) is thiamine pyrophosphate binding. Residues Asp-480 and Asn-507 each contribute to the Mg(2+) site.

The protein belongs to the TPP enzyme family. Mg(2+) serves as cofactor. Thiamine diphosphate is required as a cofactor.

It carries out the reaction 2 pyruvate + H(+) = (2S)-2-acetolactate + CO2. Its pathway is amino-acid biosynthesis; L-isoleucine biosynthesis; L-isoleucine from 2-oxobutanoate: step 1/4. It participates in amino-acid biosynthesis; L-valine biosynthesis; L-valine from pyruvate: step 1/4. The polypeptide is Acetolactate synthase (ilvB) (Mycobacterium bovis (strain ATCC BAA-935 / AF2122/97)).